We begin with the raw amino-acid sequence, 172 residues long: MORN repeat-containing protein 5 (172 aa).

MORN repeat units follow at residues Tyr-8–Lys-30, Tyr-31–Arg-53, and Phe-54–Gln-75.

It is found in the cell projection. The protein resides in the cilium. The protein localises to the flagellum. The sequence is that of MORN repeat-containing protein 5 (MORN5) from Bos taurus (Bovine).